Consider the following 329-residue polypeptide: CDP-diacylglycerol--glycerol-3-phosphate 3-phosphatidyltransferase 1, chloroplastic (329 aa).

A chloroplast-targeting transit peptide spans 1–38; it reads MAFLKTLNPLLRRSPTPIPNPRSLLSLDAFLAASSPTA. 4 helical membrane passes run 150 to 170, 190 to 210, 217 to 237, and 300 to 320; these read PVIGWMIVNEWYLPAFGTLAL, VFGSYLDPLADKVLIGCVAIA, LHPGLVGLVVVRDLLLVGGAV, and ITVLSWLVASTTIASTVGYGI.

The protein belongs to the CDP-alcohol phosphatidyltransferase class-I family. The cofactor is Mn(2+).

It is found in the plastid. It localises to the chloroplast membrane. The catalysed reaction is a CDP-1,2-diacyl-sn-glycerol + sn-glycerol 3-phosphate = a 1,2-diacyl-sn-glycero-3-phospho-(1'-sn-glycero-3'-phosphate) + CMP + H(+). It participates in phospholipid metabolism; phosphatidylglycerol biosynthesis; phosphatidylglycerol from CDP-diacylglycerol: step 1/2. In terms of biological role, catalyzes the committed step to the synthesis of the acidic phospholipids. Transfers specifically a phosphatidyl group from CDP-diacylglycerol to glycerol-3-phosphate to form phosphatidylglycerophosphate. The sequence is that of CDP-diacylglycerol--glycerol-3-phosphate 3-phosphatidyltransferase 1, chloroplastic from Oryza sativa subsp. japonica (Rice).